The sequence spans 352 residues: Rhodopsin (352 aa).

Residues 1-36 are Extracellular-facing; sequence MNGTEGPFFYIPMVNTTGIVRSPYEYPQYYLVNPAA. 2 N-linked (GlcNAc...) asparagine glycosylation sites follow: N2 and N15. The helical transmembrane segment at 37 to 61 threads the bilayer; that stretch reads YAALGAYMFFLILTGFPINFLTLYV. The Cytoplasmic segment spans residues 62–73; the sequence is TLEHKKLRTALN. A helical membrane pass occupies residues 74–96; the sequence is LILLNLAVADLFMVFGGFTTTMY. Residues 97 to 110 lie on the Extracellular side of the membrane; sequence TSMHGYFVLGRLGC. Cysteines 110 and 187 form a disulfide. The chain crosses the membrane as a helical span at residues 111–133; that stretch reads NVEGFFATLGGEIALWSLVVLAV. A 'Ionic lock' involved in activated form stabilization motif is present at residues 134–136; that stretch reads ERW. The Cytoplasmic segment spans residues 134 to 152; sequence ERWVVVCKPISNFRFTENH. The helical transmembrane segment at 153–173 threads the bilayer; it reads AIMGVAFSWIMAATCAVPPLV. Residues 174–202 are Extracellular-facing; sequence GWSRYIPEGMQCSCGVDYYTRAEGFNNES. Residues 203 to 224 traverse the membrane as a helical segment; it reads FVIYMFIVHFLAPLIVIFFCYG. Over 225 to 252 the chain is Cytoplasmic; that stretch reads RLLCAVKEAAAAQQESETTQRAEREVTR. Residues 253-274 form a helical membrane-spanning segment; sequence MVIIMVIGFLTSWLPYASVAWY. At 275–286 the chain is on the extracellular side; the sequence is IFTHQGTEFGPL. The helical transmembrane segment at 287–308 threads the bilayer; that stretch reads FMTIPAFFAKSSALYNPMIYIC. The residue at position 296 (K296) is an N6-(retinylidene)lysine. The Cytoplasmic portion of the chain corresponds to 309–352; that stretch reads MNKQFRHCMITTLCCGKNPFEEEEGASTTKTEASSVSSSSVSPA. Residues C322 and C323 are each lipidated (S-palmitoyl cysteine). Residues 331-352 are disordered; it reads EEGASTTKTEASSVSSSSVSPA. Positions 342–352 are enriched in low complexity; the sequence is SSVSSSSVSPA.

Belongs to the G-protein coupled receptor 1 family. Opsin subfamily. Post-translationally, phosphorylated on some or all of the serine and threonine residues present in the C-terminal region. In terms of processing, contains one covalently linked retinal chromophore.

It localises to the membrane. Its subcellular location is the cell projection. The protein resides in the cilium. It is found in the photoreceptor outer segment. In terms of biological role, photoreceptor required for image-forming vision at low light intensity. While most salt water fish species use retinal as chromophore, most freshwater fish use 3-dehydroretinal, or a mixture of retinal and 3-dehydroretinal. Light-induced isomerization of 11-cis to all-trans retinal triggers a conformational change that activates signaling via G-proteins. Subsequent receptor phosphorylation mediates displacement of the bound G-protein alpha subunit by arrestin and terminates signaling. In Pomatoschistus minutus (Sand goby), this protein is Rhodopsin (rho).